The primary structure comprises 404 residues: Glycosylated lysosomal membrane protein (404 aa).

The N-terminal stretch at 1–35 (MRGSVERGWGWGHCASSPLLLWTLLLFAAPFGLLG) is a signal peptide. At 36–371 (EKTRQLSLEV…GRLVPTSPGH (336 aa)) the chain is on the lumenal side. N-linked (GlcNAc...) asparagine glycans are attached at residues asparagine 65, asparagine 134, asparagine 159, asparagine 186, and asparagine 229. The chain crosses the membrane as a helical span at residues 372 to 392 (HGSALGAPGLMLLGGGLVLLL). The Cytoplasmic portion of the chain corresponds to 393-404 (HHRKYSEYQSIN). Positions 400 to 404 (YQSIN) match the Lysosomal targeting motif motif.

Belongs to the GLMP family. In terms of assembly, interacts (via lumenal domain) with lysosomal protein MFSD1; the interaction starts while both proteins are still in the endoplasmic reticulum and is required for stabilization of MFSD1 in lysosomes but has no direct effect on its targeting to lysosomes or transporter activity. Post-translationally, highly N-glycosylated. N-glycosylation is essential for GLMP stability and for MFSD1 lysosomal localization.

Its subcellular location is the lysosome membrane. Functionally, required to protect lysosomal transporter MFSD1 from lysosomal proteolysis and for MFSD1 lysosomal localization. This is Glycosylated lysosomal membrane protein from Pongo abelii (Sumatran orangutan).